We begin with the raw amino-acid sequence, 422 residues long: Cystine lyase CORI3 (422 aa).

The protein belongs to the class-I pyridoxal-phosphate-dependent aminotransferase family. In terms of assembly, homodimer. Pyridoxal 5'-phosphate is required as a cofactor. Expressed in cotyledons, sepals, pistils, flower buds, phloem companion cells and vascular tissues of petiole, leaf, filament and fruit.

It catalyses the reaction L-cystine + H2O = S-sulfanyl-L-cysteine + pyruvate + NH4(+). In terms of biological role, possesses cystine lyase activity in vitro. Does not possess tyrosine aminotransferase, alanine aminotransferase, aspartate aminotransferase and tryptophan aminotransferase activities. The chain is Cystine lyase CORI3 from Arabidopsis thaliana (Mouse-ear cress).